The primary structure comprises 207 residues: Large ribosomal subunit protein bL25 (207 aa).

The disordered stretch occupies residues 1–20; sequence MANHQIKAQRRKDEGKGASR.

It belongs to the bacterial ribosomal protein bL25 family. CTC subfamily. As to quaternary structure, part of the 50S ribosomal subunit; part of the 5S rRNA/L5/L18/L25 subcomplex. Contacts the 5S rRNA. Binds to the 5S rRNA independently of L5 and L18.

Functionally, this is one of the proteins that binds to the 5S RNA in the ribosome where it forms part of the central protuberance. This is Large ribosomal subunit protein bL25 from Xylella fastidiosa (strain M23).